We begin with the raw amino-acid sequence, 292 residues long: MSDAAKSNNNASADAPDPTTPDATGEADAANAATPTTPRGNHNNNNSANGRSKNKLKSTQNSSGGGSIDKLSPDQDIFINAADGLPNQHPSLPKEGDVDSDTEPEVDADSFDDLPTSIIVTNIHSEVFANPELKHAMEELFRTFSESATFQWLRSFRRLRVNYDNAIAAANARIKLHQYEFNKKTVITCYFAQPVTPVSNKNLQPPAPVKQFLISPPASPPAGWEPREEGEPLVNHDLLAALASLTPGESHELHPQSEDQPAIIVHTAMLAETGPGLQVKAPIVQTKCPERA.

The segment covering 1–51 (MSDAAKSNNNASADAPDPTTPDATGEADAANAATPTTPRGNHNNNNSANGR) has biased composition (low complexity). Residues 1–111 (MSDAAKSNNN…TEPEVDADSF (111 aa)) are disordered. Ser-67, Ser-72, and Ser-100 each carry phosphoserine. Residues 98 to 111 (VDSDTEPEVDADSF) show a composition bias toward acidic residues. Phosphothreonine is present on residues Thr-102 and Thr-196. 2 positions are modified to phosphoserine: Ser-215 and Ser-219. Phosphothreonine is present on Thr-246.

The protein belongs to the RCAN family. As to quaternary structure, interacts with Pp2B-14D, CanA-14F and CanB2. Post-translationally, phosphorylation at Ser-215 and Ser-219 is essential for calcineurin activation and completion of female meiosis. Sgg is required for phosphorylation of Ser-215 in activated eggs. Ser-100, Thr-102 and Ser-219 are highly phosphorylated in both ovaries and activated eggs; however, phosphorylation at Ser-100 or Thr-102 is not required for sra function in completion of female meiosis. As to expression, expressed in central nervous system of the third instar larvae, with a relatively intense signal in the brain and weak signals in the ventral ganglion. Relatively low, but ubiquitous expression level is observed in leg and wing imaginal disks, no signal is detected in the eye-antennal disks. Expressed in all neurons in the adult brain.

Its function is as follows. Required for elongation of meiosis I spindle. Critical for ovulation, meiotic progression in oocytes and female courtship behavior, including their postmating changes. Regulates female meiosis by controlling calcineurin activity in the germline. Has a role in calcium signaling during egg activation; bcd mRNA polyadenylation and translation in the oocyte. The polypeptide is Protein sarah (sra) (Drosophila melanogaster (Fruit fly)).